The primary structure comprises 436 residues: 3-ketoacyl-CoA thiolase (436 aa).

The active-site Acyl-thioester intermediate is cysteine 99. Active-site proton acceptor residues include histidine 392 and cysteine 422.

Belongs to the thiolase-like superfamily. Thiolase family. Heterotetramer of two alpha chains (FadJ) and two beta chains (FadI).

The protein resides in the cytoplasm. The enzyme catalyses an acyl-CoA + acetyl-CoA = a 3-oxoacyl-CoA + CoA. It participates in lipid metabolism; fatty acid beta-oxidation. Its function is as follows. Catalyzes the final step of fatty acid oxidation in which acetyl-CoA is released and the CoA ester of a fatty acid two carbons shorter is formed. The sequence is that of 3-ketoacyl-CoA thiolase from Escherichia coli O81 (strain ED1a).